Here is a 215-residue protein sequence, read N- to C-terminus: uncharacterized protein (215 aa).

Transmembrane regions (helical) follow at residues 40–60 (VLFPIPVFCSIKVLLDYFCSL) and 72–92 (LIWFYVLSVILCKSLFAVGYL).

It localises to the mitochondrion membrane. This is an uncharacterized protein from Arabidopsis thaliana (Mouse-ear cress).